The sequence spans 619 residues: Dihydroxy-acid dehydratase (619 aa).

Aspartate 81 contacts Mg(2+). Cysteine 122 serves as a coordination point for [2Fe-2S] cluster. The Mg(2+) site is built by aspartate 123 and lysine 124. Lysine 124 is subject to N6-carboxylysine. A [2Fe-2S] cluster-binding site is contributed by cysteine 195. A Mg(2+)-binding site is contributed by glutamate 491. Catalysis depends on serine 517, which acts as the Proton acceptor.

Belongs to the IlvD/Edd family. In terms of assembly, homodimer. It depends on [2Fe-2S] cluster as a cofactor. Requires Mg(2+) as cofactor.

The enzyme catalyses (2R)-2,3-dihydroxy-3-methylbutanoate = 3-methyl-2-oxobutanoate + H2O. It carries out the reaction (2R,3R)-2,3-dihydroxy-3-methylpentanoate = (S)-3-methyl-2-oxopentanoate + H2O. It participates in amino-acid biosynthesis; L-isoleucine biosynthesis; L-isoleucine from 2-oxobutanoate: step 3/4. Its pathway is amino-acid biosynthesis; L-valine biosynthesis; L-valine from pyruvate: step 3/4. In terms of biological role, functions in the biosynthesis of branched-chain amino acids. Catalyzes the dehydration of (2R,3R)-2,3-dihydroxy-3-methylpentanoate (2,3-dihydroxy-3-methylvalerate) into 2-oxo-3-methylpentanoate (2-oxo-3-methylvalerate) and of (2R)-2,3-dihydroxy-3-methylbutanoate (2,3-dihydroxyisovalerate) into 2-oxo-3-methylbutanoate (2-oxoisovalerate), the penultimate precursor to L-isoleucine and L-valine, respectively. This Rhodopseudomonas palustris (strain HaA2) protein is Dihydroxy-acid dehydratase.